The chain runs to 142 residues: uncharacterized protein (142 aa).

The helical transmembrane segment at 75–91 (YAAILAQVSFAFLCTGF) threads the bilayer.

It localises to the membrane. This is an uncharacterized protein from Haemophilus influenzae (strain ATCC 51907 / DSM 11121 / KW20 / Rd).